We begin with the raw amino-acid sequence, 750 residues long: Meiosis protein mei2 (750 aa).

The disordered stretch occupies residues 1–20 (MIMETESPLSITSPSPSDST). Residues 7–20 (SPLSITSPSPSDST) are compositionally biased toward polar residues. 2 RRM domains span residues 195–270 (RYLF…FCQR) and 293–361 (LLLN…CLQV).

Binds rad24 when phosphorylated. In terms of processing, inactivated by phosphorylation by ran1/pat1.

Its function is as follows. Crucial for commitment to meiosis but it is not sufficient itself for the commitment. May be a splicing regulator. This is Meiosis protein mei2 (mei2) from Schizosaccharomyces pombe (strain 972 / ATCC 24843) (Fission yeast).